Consider the following 447-residue polypeptide: MREVISINVGQAGCQIGNACWELYSLEHGIKPDGHLEDGLSKPKGGEEGFSTFFHETGYGKFVPRAIYVDLEPNVIDEVRNGPYKDLFHPEQLISGKEDAANNYARGHYTVGREILGDVLDRIRKLADQCDGLQGFLFTHSLGGGTGSGLGSLLLEELSAEYGKKSKLEFAVYPAPQVSTSVVEPYNTVLTTHTTLEHADCTFMVDNEAIYDMCKRNLDIPRPSFANLNNLIAQVVSSVTASLRFDGSLNVDLNEFQTNLVPYPRIHFPLVSYSPVLSKSKAFHESNSVSEITNACFEPGNQMVKCDPRDGKYMATCLLYRGDVVTRDVQRAVEQVKNKKTVQLVDWCPTGFKIGICYEPPTATPNSQLATVDRAVCMLSNTTSIAEAWKRIDRKFDLMYAKRAFVHWYVGEGMEEGEFTEAREDLAALERDYIEVGADSYAEEEEF.

8 residues coordinate GTP: glutamine 11, glutamate 72, serine 141, glycine 145, threonine 146, threonine 180, asparagine 207, and asparagine 229. Glutamate 72 provides a ligand contact to Mg(2+). Residue glutamate 255 is part of the active site.

This sequence belongs to the tubulin family. In terms of assembly, dimer of alpha and beta chains. A typical microtubule is a hollow water-filled tube with an outer diameter of 25 nm and an inner diameter of 15 nM. Alpha-beta heterodimers associate head-to-tail to form protofilaments running lengthwise along the microtubule wall with the beta-tubulin subunit facing the microtubule plus end conferring a structural polarity. Microtubules usually have 13 protofilaments but different protofilament numbers can be found in some organisms and specialized cells. The cofactor is Mg(2+).

It is found in the cytoplasm. Its subcellular location is the cytoskeleton. It catalyses the reaction GTP + H2O = GDP + phosphate + H(+). Its function is as follows. Tubulin is the major constituent of microtubules, a cylinder consisting of laterally associated linear protofilaments composed of alpha- and beta-tubulin heterodimers. Microtubules grow by the addition of GTP-tubulin dimers to the microtubule end, where a stabilizing cap forms. Below the cap, tubulin dimers are in GDP-bound state, owing to GTPase activity of alpha-tubulin. This chain is Tubulin alpha-1 chain (TUB1), found in Saccharomyces cerevisiae (strain ATCC 204508 / S288c) (Baker's yeast).